The primary structure comprises 545 residues: Phenylalanine--tRNA ligase beta subunit (545 aa).

The 76-residue stretch at phenylalanine 268–proline 343 folds into the B5 domain. The Mg(2+) site is built by aspartate 321, aspartate 327, glutamate 330, and aspartate 331.

This sequence belongs to the phenylalanyl-tRNA synthetase beta subunit family. Type 2 subfamily. In terms of assembly, tetramer of two alpha and two beta subunits. The cofactor is Mg(2+).

The protein localises to the cytoplasm. It carries out the reaction tRNA(Phe) + L-phenylalanine + ATP = L-phenylalanyl-tRNA(Phe) + AMP + diphosphate + H(+). The protein is Phenylalanine--tRNA ligase beta subunit of Saccharolobus islandicus (strain M.16.27) (Sulfolobus islandicus).